Here is a 270-residue protein sequence, read N- to C-terminus: Mediator of RNA polymerase II transcription subunit 4 (270 aa).

The interval 1 to 22 is disordered; it reads MAASSSGEKEKERMGGVSGMTG. N-acetylalanine is present on alanine 2. A coiled-coil region spans residues 26–131; that stretch reads TRERLLSALE…ATAVYQAKEK (106 aa). Phosphoserine is present on serine 32. The disordered stretch occupies residues 227-270; that stretch reads MSVNMLPPNHSTDFLLEPPGHNKENEDDVEVMSTDSSSSSSDSD. Residues 259 to 270 are compositionally biased toward low complexity; sequence STDSSSSSSDSD.

It belongs to the Mediator complex subunit 4 family. In terms of assembly, component of the Mediator complex, which is composed of MED1, MED4, MED6, MED7, MED8, MED9, MED10, MED11, MED12, MED13, MED13L, MED14, MED15, MED16, MED17, MED18, MED19, MED20, MED21, MED22, MED23, MED24, MED25, MED26, MED27, MED29, MED30, MED31, CCNC, CDK8 and CDC2L6/CDK11. The MED12, MED13, CCNC and CDK8 subunits form a distinct module termed the CDK8 module. Mediator containing the CDK8 module is less active than Mediator lacking this module in supporting transcriptional activation. Individual preparations of the Mediator complex lacking one or more distinct subunits have been variously termed ARC, CRSP, DRIP, PC2, SMCC and TRAP.

The protein localises to the nucleus. Component of the Mediator complex, a coactivator involved in the regulated transcription of nearly all RNA polymerase II-dependent genes. Mediator functions as a bridge to convey information from gene-specific regulatory proteins to the basal RNA polymerase II transcription machinery. Mediator is recruited to promoters by direct interactions with regulatory proteins and serves as a scaffold for the assembly of a functional preinitiation complex with RNA polymerase II and the general transcription factors. The sequence is that of Mediator of RNA polymerase II transcription subunit 4 (Med4) from Rattus norvegicus (Rat).